A 278-amino-acid polypeptide reads, in one-letter code: 4-diphosphocytidyl-2-C-methyl-D-erythritol kinase (278 aa).

Lys10 is a catalytic residue. 93-103 (PMGGGLGGGSS) provides a ligand contact to ATP. The active site involves Asp135.

It belongs to the GHMP kinase family. IspE subfamily.

The catalysed reaction is 4-CDP-2-C-methyl-D-erythritol + ATP = 4-CDP-2-C-methyl-D-erythritol 2-phosphate + ADP + H(+). It functions in the pathway isoprenoid biosynthesis; isopentenyl diphosphate biosynthesis via DXP pathway; isopentenyl diphosphate from 1-deoxy-D-xylulose 5-phosphate: step 3/6. In terms of biological role, catalyzes the phosphorylation of the position 2 hydroxy group of 4-diphosphocytidyl-2C-methyl-D-erythritol. The polypeptide is 4-diphosphocytidyl-2-C-methyl-D-erythritol kinase (Thiobacillus denitrificans (strain ATCC 25259 / T1)).